The chain runs to 403 residues: S-adenosylmethionine synthase (403 aa).

An ATP-binding site is contributed by His-15. Asp-17 lines the Mg(2+) pocket. Glu-43 lines the K(+) pocket. 2 residues coordinate L-methionine: Glu-56 and Gln-99. Residues Gln-99–Arg-109 form a flexible loop region. ATP-binding positions include Asp-166–Lys-168, Lys-232–Phe-233, Asp-241, Arg-247–Lys-248, Ala-264, and Lys-268. Asp-241 contacts L-methionine. Lys-272 contributes to the L-methionine binding site.

The protein belongs to the AdoMet synthase family. Homotetramer; dimer of dimers. The cofactor is Mg(2+). It depends on K(+) as a cofactor.

It is found in the cytoplasm. It catalyses the reaction L-methionine + ATP + H2O = S-adenosyl-L-methionine + phosphate + diphosphate. The protein operates within amino-acid biosynthesis; S-adenosyl-L-methionine biosynthesis; S-adenosyl-L-methionine from L-methionine: step 1/1. Catalyzes the formation of S-adenosylmethionine (AdoMet) from methionine and ATP. The overall synthetic reaction is composed of two sequential steps, AdoMet formation and the subsequent tripolyphosphate hydrolysis which occurs prior to release of AdoMet from the enzyme. This chain is S-adenosylmethionine synthase, found in Xylella fastidiosa (strain Temecula1 / ATCC 700964).